A 249-amino-acid chain; its full sequence is 3-deoxy-manno-octulosonate cytidylyltransferase (249 aa).

The protein belongs to the KdsB family.

The protein localises to the cytoplasm. It carries out the reaction 3-deoxy-alpha-D-manno-oct-2-ulosonate + CTP = CMP-3-deoxy-beta-D-manno-octulosonate + diphosphate. The protein operates within nucleotide-sugar biosynthesis; CMP-3-deoxy-D-manno-octulosonate biosynthesis; CMP-3-deoxy-D-manno-octulosonate from 3-deoxy-D-manno-octulosonate and CTP: step 1/1. Its pathway is bacterial outer membrane biogenesis; lipopolysaccharide biosynthesis. Functionally, activates KDO (a required 8-carbon sugar) for incorporation into bacterial lipopolysaccharide in Gram-negative bacteria. The polypeptide is 3-deoxy-manno-octulosonate cytidylyltransferase (Aliivibrio salmonicida (strain LFI1238) (Vibrio salmonicida (strain LFI1238))).